The following is a 546-amino-acid chain: MQNINPTQTAAWSALEQHKADNLNIPQLFAEDANRFDKYHLNFEQQILVDFSKNAINQKTLELLRQLANECGLASATEAMFSGQKINRTENRAVLHTALRNRSNTPVLVDGKDVMPEVNAVLAKMKDFCERIISGSWKGYTGKAITDVINIGIGGSDLGPYMVTEALRPYKNHLNMHFVSNVDGTHIAEVLKKVNPETTLVLVASKTFTTQETMTNALTAREWLLAAVKDESAVAKHFAALSTNAKEVAKFGIDTANMFEFWDWVGGRYSLWSAIGLSIALSLGFENFEALLSGAHAMDNHFRTAPIEKNIPTTLALIGIWNSNFLGAETEALLPYDQYLHRFAAYFQQGNMESNGKFVGRDGSPVTHQTGPIVWGEPGTNGQHAFYQLIHQGTKLIPCDFIAPAQTHNPVGDHHAKLLSNFFAQTEALAFGKSKETVEAEFVAAGKNLADVAEIVPFKVFTGNKPTNSILVQKITPFTLGALIAMYEHKIFVQGVIFNIYSFDQWGVELGKQLANRILPELQNAEKISSHDSSTNGLINQFKAWR.

Glu-353 functions as the Proton donor in the catalytic mechanism. Catalysis depends on residues His-384 and Lys-512.

It belongs to the GPI family.

The protein resides in the cytoplasm. It catalyses the reaction alpha-D-glucose 6-phosphate = beta-D-fructose 6-phosphate. It functions in the pathway carbohydrate biosynthesis; gluconeogenesis. The protein operates within carbohydrate degradation; glycolysis; D-glyceraldehyde 3-phosphate and glycerone phosphate from D-glucose: step 2/4. Functionally, catalyzes the reversible isomerization of glucose-6-phosphate to fructose-6-phosphate. The protein is Glucose-6-phosphate isomerase of Actinobacillus pleuropneumoniae serotype 5b (strain L20).